The primary structure comprises 481 residues: Cobyric acid synthase (481 aa).

Positions alanine 247–serine 433 constitute a GATase cobBQ-type domain. Residue cysteine 328 is the Nucleophile of the active site. Histidine 425 is a catalytic residue.

It belongs to the CobB/CobQ family. CobQ subfamily.

Its pathway is cofactor biosynthesis; adenosylcobalamin biosynthesis. Functionally, catalyzes amidations at positions B, D, E, and G on adenosylcobyrinic A,C-diamide. NH(2) groups are provided by glutamine, and one molecule of ATP is hydrogenolyzed for each amidation. The polypeptide is Cobyric acid synthase (Alcanivorax borkumensis (strain ATCC 700651 / DSM 11573 / NCIMB 13689 / SK2)).